The sequence spans 76 residues: DNA-directed RNA polymerase subunit epsilon (76 aa).

It belongs to the RNA polymerase subunit epsilon family. RNAP is composed of a core of 2 alpha, a beta and a beta' subunit. The core is associated with a delta subunit, and at least one of epsilon or omega. When a sigma factor is associated with the core the holoenzyme is formed, which can initiate transcription.

It carries out the reaction RNA(n) + a ribonucleoside 5'-triphosphate = RNA(n+1) + diphosphate. In terms of biological role, a non-essential component of RNA polymerase (RNAP). This is DNA-directed RNA polymerase subunit epsilon from Streptococcus thermophilus (strain CNRZ 1066).